The following is a 43-amino-acid chain: Methionine aminopeptidase (43 aa).

It belongs to the peptidase M24A family. Methionine aminopeptidase type 1 subfamily. In terms of assembly, monomer. Co(2+) serves as cofactor. The cofactor is Zn(2+). It depends on Mn(2+) as a cofactor. Requires Fe(2+) as cofactor.

The catalysed reaction is Release of N-terminal amino acids, preferentially methionine, from peptides and arylamides.. Functionally, removes the N-terminal methionine from nascent proteins. The N-terminal methionine is often cleaved when the second residue in the primary sequence is small and uncharged (Met-Ala-, Cys, Gly, Pro, Ser, Thr, or Val). Requires deformylation of the N(alpha)-formylated initiator methionine before it can be hydrolyzed. The sequence is that of Methionine aminopeptidase (map) from Klebsiella oxytoca.